A 788-amino-acid chain; its full sequence is Endonuclease MutS2 (788 aa).

332–339 (GPNTGGKT) is a binding site for ATP. The Smr domain occupies 713–788 (VDLRGMDAEE…GTGVTVVELK (76 aa)).

Belongs to the DNA mismatch repair MutS family. MutS2 subfamily. As to quaternary structure, homodimer. Binds to stalled ribosomes, contacting rRNA.

Endonuclease that is involved in the suppression of homologous recombination and thus may have a key role in the control of bacterial genetic diversity. In terms of biological role, acts as a ribosome collision sensor, splitting the ribosome into its 2 subunits. Detects stalled/collided 70S ribosomes which it binds and splits by an ATP-hydrolysis driven conformational change. Acts upstream of the ribosome quality control system (RQC), a ribosome-associated complex that mediates the extraction of incompletely synthesized nascent chains from stalled ribosomes and their subsequent degradation. Probably generates substrates for RQC. The polypeptide is Endonuclease MutS2 (Clostridium botulinum (strain ATCC 19397 / Type A)).